We begin with the raw amino-acid sequence, 390 residues long: Lipid-A-disaccharide synthase (390 aa).

Belongs to the LpxB family.

It catalyses the reaction a lipid X + a UDP-2-N,3-O-bis[(3R)-3-hydroxyacyl]-alpha-D-glucosamine = a lipid A disaccharide + UDP + H(+). Its pathway is bacterial outer membrane biogenesis; LPS lipid A biosynthesis. Functionally, condensation of UDP-2,3-diacylglucosamine and 2,3-diacylglucosamine-1-phosphate to form lipid A disaccharide, a precursor of lipid A, a phosphorylated glycolipid that anchors the lipopolysaccharide to the outer membrane of the cell. The chain is Lipid-A-disaccharide synthase from Haemophilus influenzae (strain 86-028NP).